A 209-amino-acid chain; its full sequence is Large ribosomal subunit protein uL3 (209 aa).

The disordered stretch occupies residues 113 to 155 (TSRGHGYQGNIKRHHQSRGPETHGSRYHRIPGSMGSIINRVPK).

This sequence belongs to the universal ribosomal protein uL3 family. As to quaternary structure, part of the 50S ribosomal subunit. Forms a cluster with proteins L14 and L19.

One of the primary rRNA binding proteins, it binds directly near the 3'-end of the 23S rRNA, where it nucleates assembly of the 50S subunit. The sequence is that of Large ribosomal subunit protein uL3 from Lactobacillus delbrueckii subsp. bulgaricus (strain ATCC 11842 / DSM 20081 / BCRC 10696 / JCM 1002 / NBRC 13953 / NCIMB 11778 / NCTC 12712 / WDCM 00102 / Lb 14).